The chain runs to 624 residues: DNA mismatch repair protein MutL (624 aa).

A disordered region spans residues 360–396 (GGNHFSQPAPRRETASTEPAVARERAPQPAYHSGSGY). Residues 369 to 385 (PRRETASTEPAVARERA) show a composition bias toward basic and acidic residues.

This sequence belongs to the DNA mismatch repair MutL/HexB family.

Its function is as follows. This protein is involved in the repair of mismatches in DNA. It is required for dam-dependent methyl-directed DNA mismatch repair. May act as a 'molecular matchmaker', a protein that promotes the formation of a stable complex between two or more DNA-binding proteins in an ATP-dependent manner without itself being part of a final effector complex. This is DNA mismatch repair protein MutL from Serratia proteamaculans (strain 568).